The primary structure comprises 857 residues: Protein sip-5 (857 aa).

Disordered regions lie at residues 1-81 (MGNA…ARRL), 157-231 (GLPI…FKPT), 384-416 (SESS…APNV), 466-517 (FGRR…GNRR), 545-747 (KAEK…PMFN), and 763-857 (HAGK…QVTL). Composition is skewed to basic and acidic residues over residues 7 to 16 (KESRGDDSGR) and 36 to 48 (ESSR…RHDL). Positions 49–61 (TGLLGRAAGGSSS) are enriched in low complexity. Residues 62–81 (HADERHERKETKQEREARRL) show a composition bias toward basic and acidic residues. Composition is skewed to polar residues over residues 179–191 (ASPT…TNHL) and 199–208 (SLSTASEHST). Low complexity-rich tracts occupy residues 209 to 230 (SNAG…PFKP), 384 to 394 (SESSVNSGSLS), and 476 to 504 (SASA…TANT). A compositionally biased stretch (basic and acidic residues) spans 545–572 (KAEKEEQKEAKKREKEREKAEKKAEKAA). Low complexity-rich tracts occupy residues 586 to 604 (SRSG…PGLS) and 621 to 645 (ASVA…ALAP). Basic and acidic residues predominate over residues 648–657 (STKDKGKAVD). The span at 688 to 697 (SSASSASSSA) shows a compositional bias: low complexity. The span at 698–712 (VESNQGSYVPPSNLQ) shows a compositional bias: polar residues. A compositionally biased stretch (basic and acidic residues) spans 783–799 (ETAKSGEGAGEHVEHVL). Composition is skewed to polar residues over residues 800-838 (DSQT…STAS) and 845-857 (NETT…QVTL).

It belongs to the SIP5 family.

It is found in the cytoplasm. In terms of biological role, may negatively regulate the snf-1 kinase. The sequence is that of Protein sip-5 (sip-5) from Neurospora crassa (strain ATCC 24698 / 74-OR23-1A / CBS 708.71 / DSM 1257 / FGSC 987).